The following is an 828-amino-acid chain: Periplasmic nitrate reductase (828 aa).

A signal peptide (tat-type signal) is located at residues 1–31 (MKLSRRSFMKANAVAAAAAAAGLSVPGVARA). The 4Fe-4S Mo/W bis-MGD-type domain occupies 39 to 95 (IKWDKAPCRFCGTGCGVLVGTQQGRVVACQGDPDAPVNRGLNCIKGYFLPKIMYGKD). Residues C46, C49, C53, and C81 each coordinate [4Fe-4S] cluster. Mo-bis(molybdopterin guanine dinucleotide)-binding positions include K83, Q150, N175, C179, 212–219 (WGANMAEM), 243–247 (STYQH), 262–264 (QSD), M372, Q376, N482, 508–509 (SD), K531, D558, and 718–727 (TGRVLEHWHT). Residue F794 participates in substrate binding. Mo-bis(molybdopterin guanine dinucleotide) contacts are provided by N802 and K819.

Belongs to the prokaryotic molybdopterin-containing oxidoreductase family. NasA/NapA/NarB subfamily. In terms of assembly, component of the periplasmic nitrate reductase NapAB complex composed of NapA and NapB. [4Fe-4S] cluster serves as cofactor. It depends on Mo-bis(molybdopterin guanine dinucleotide) as a cofactor. In terms of processing, predicted to be exported by the Tat system. The position of the signal peptide cleavage has not been experimentally proven.

The protein resides in the periplasm. It carries out the reaction 2 Fe(II)-[cytochrome] + nitrate + 2 H(+) = 2 Fe(III)-[cytochrome] + nitrite + H2O. Its function is as follows. Catalytic subunit of the periplasmic nitrate reductase complex NapAB. Receives electrons from NapB and catalyzes the reduction of nitrate to nitrite. This Escherichia coli (strain K12 / MC4100 / BW2952) protein is Periplasmic nitrate reductase.